The primary structure comprises 1215 residues: Endoplasmic reticulum transmembrane helix translocase (1215 aa).

The Cytoplasmic portion of the chain corresponds to 1–27; that stretch reads MTKKSFVSSPIVRDSTLLVPKSLIAKP. A helical membrane pass occupies residues 28–43; it reads YVLPFFPLYATFAQLY. Topologically, residues 44–56 are lumenal; sequence FQQYDRYIKGPEW. A helical transmembrane segment spans residues 57–76; the sequence is TFVYLGTLVSLNILVMLMPA. Over 77–188 the chain is Cytoplasmic; that stretch reads WNVKIKAKFN…ENSFDIPIPT (112 aa). The segment at 156–185 is A-domain; part 1; sequence KIGDFQKCKGHSGDLTHLKRLYGENSFDIP. Residues 189–216 form a helical membrane-spanning segment; the sequence is FMELFKEHAVAPLFVFQVFCVALWLLDE. Residue phenylalanine 217 is a topological domain, lumenal. A helical transmembrane segment spans residues 218–246; sequence WYYSLFNLFMIISMEAAAVFQRLTALKEF. At 247–395 the chain is on the cytoplasmic side; sequence RTMGIKPYTI…IYSAERVSVD (149 aa). Positions 250–390 are A-domain; part 2; it reads GIKPYTINVF…LVRVMIYSAE (141 aa). Serine 324 is modified (phosphoserine). The chain crosses the membrane as a helical span at residues 396–425; that stretch reads NKEALMFILFLLIFAVIASWYVWVEGTKMG. At 426–427 the chain is on the lumenal side; sequence RI. The next 2 membrane-spanning stretches (helical) occupy residues 428–442 and 446–464; these read QSKLILDCILIITSV and ELPMELTMAVNSSLAALAK. The Cytoplasmic segment spans residues 465 to 971; it reads FYVYCTEPFR…APFTSKLANV (507 aa). The interval 466–495 is P-domain; part 1; sequence YVYCTEPFRIPFAGRIDVCCFDKTGTLTGE. Catalysis depends on aspartate 487, which acts as the 4-aspartylphosphate intermediate. Mg(2+) contacts are provided by aspartate 487 and threonine 489. ATP-binding positions include 487–489, phenylalanine 582, arginine 634, aspartate 699, and 816–820; these read DKT and DGTND. Positions 497 to 674 are N-domain; it reads LVFEGLAGIS…FNGFLIFHCP (178 aa). The tract at residues 677-837 is P-domain; part 2; it reads DDAIETIKML…HVGIALLNGT (161 aa). Mg(2+) is bound at residue aspartate 816. Positions 838–953 are arm-like; it reads EEGLKKLGEQ…DAQGDEAPAL (116 aa). A Phosphoserine modification is found at serine 936. The tract at residues 954-969 is P-domain; part 3; sequence KLGDASCAAPFTSKLA. A helical transmembrane segment spans residues 972–1011; that stretch reads SAVTNIIRQGRCALVNTIQMYKILALNCLISAYSLSIIYM. The Lumenal portion of the chain corresponds to 1012–1017; sequence AGVKFG. The chain crosses the membrane as a helical span at residues 1018 to 1035; sequence DGQATVSGLLLSVCFLSI. Residues 1036-1055 lie on the Cytoplasmic side of the membrane; it reads SRGKPLEKLSKQRPQSGIFN. A helical transmembrane segment spans residues 1056–1084; sequence VYIMGSILSQFAVHIATLVYITTEIYKLE. Topologically, residues 1085-1099 are lumenal; the sequence is PREPQVDLEKEFAPS. Residues 1100 to 1121 traverse the membrane as a helical segment; the sequence is LLNTGIFIIQLVQQVSTFAVNY. Residues 1122–1133 are Cytoplasmic-facing; sequence QGEPFRENIRSN. The helical transmembrane segment at 1134-1151 threads the bilayer; it reads KGMYYGLLGVTGLALASA. The Lumenal segment spans residues 1152–1168; it reads TEFLPELNEAMKFVPMT. The helical transmembrane segment at 1169–1197 threads the bilayer; it reads DDFKIKLTLTLLLDFFGSWGVEHFFKFFF. Over 1198–1215 the chain is Cytoplasmic; sequence MDDKPSDISVQQVKIASK.

Belongs to the cation transport ATPase (P-type) (TC 3.A.3) family. Type V subfamily. Mg(2+) is required as a cofactor.

The protein localises to the endoplasmic reticulum membrane. It carries out the reaction [protein]-with a C-terminal TM segment(out) + ATP + H2O = [protein]-with a C-terminal TM segment(in) + ADP + phosphate + H(+). Its activity is regulated as follows. The ATPase activity is stimulated by phosphatidylinositol 4-phosphate (PI4P). Functionally, endoplasmic reticulum translocase required to remove mitochondrial transmembrane proteins mistargeted to the endoplasmic reticulum. Acts as a dislocase that mediates the ATP-dependent extraction of mislocalized mitochondrial transmembrane proteins from the endoplasmic reticulum membrane. Specifically binds mitochondrial tail-anchored transmembrane proteins: has an atypically large substrate-binding pocket that recognizes and binds moderately hydrophobic transmembranes with short hydrophilic lumenal domains. The polypeptide is Endoplasmic reticulum transmembrane helix translocase (Saccharomyces cerevisiae (strain ATCC 204508 / S288c) (Baker's yeast)).